A 177-amino-acid chain; its full sequence is von Ebner gland protein 1 (177 aa).

Positions 1–18 (MKALLLTFGLSLLAALQA) are cleaved as a signal peptide. A disulfide bridge links Cys-80 with Cys-172.

This sequence belongs to the calycin superfamily. Lipocalin family. In terms of assembly, homodimer.

The protein localises to the secreted. Its function is as follows. Could play a role in taste reception. Could be necessary for the concentration and delivery of sapid molecules in the gustatory system. This chain is von Ebner gland protein 1 (Vegp1), found in Rattus norvegicus (Rat).